Consider the following 388-residue polypeptide: Chaperone protein DnaJ 1 (388 aa).

Residues 10–74 (DFYKELGVSS…VKRKEYDETR (65 aa)) enclose the J domain. Residues 159–237 (GVAMPLRLTS…CKGTGVTTRT (79 aa)) form a CR-type zinc finger. Zn(2+)-binding residues include C172, C175, C189, C192, C211, C214, C225, and C228. 4 CXXCXGXG motif repeats span residues 172–179 (CTNCHGSG), 189–196 (CSTCNGSG), 211–218 (CTECRGSG), and 225–232 (CEECKGTG).

This sequence belongs to the DnaJ family. Homodimer. It depends on Zn(2+) as a cofactor.

The protein resides in the cytoplasm. In terms of biological role, participates actively in the response to hyperosmotic and heat shock by preventing the aggregation of stress-denatured proteins and by disaggregating proteins, also in an autonomous, DnaK-independent fashion. Unfolded proteins bind initially to DnaJ; upon interaction with the DnaJ-bound protein, DnaK hydrolyzes its bound ATP, resulting in the formation of a stable complex. GrpE releases ADP from DnaK; ATP binding to DnaK triggers the release of the substrate protein, thus completing the reaction cycle. Several rounds of ATP-dependent interactions between DnaJ, DnaK and GrpE are required for fully efficient folding. Also involved, together with DnaK and GrpE, in the DNA replication of plasmids through activation of initiation proteins. The chain is Chaperone protein DnaJ 1 from Mycobacterium leprae (strain TN).